Consider the following 70-residue polypeptide: Conotoxin Ep11.12 (70 aa).

An N-terminal signal peptide occupies residues 1–26 (MMFRVTSVGCFLLVILSLNLVVLTNA). 4 disulfides stabilise this stretch: cysteine 27-cysteine 41, cysteine 34-cysteine 46, cysteine 40-cysteine 50, and cysteine 45-cysteine 54. Proline 57 is modified (proline amide). Positions 61-70 (AKLREFFRQR) are excised as a propeptide.

This sequence belongs to the conotoxin I2 superfamily. In terms of tissue distribution, expressed by the venom duct.

Its subcellular location is the secreted. The polypeptide is Conotoxin Ep11.12 (Conus episcopatus (Bishop's cone)).